We begin with the raw amino-acid sequence, 286 residues long: MADQSCIAEALQWAYVQLAASSESAHLDAEVLLLYCLNKNRAYLYTWPEKALSVEQWKRFQQMVQRRQQGVPVAHIVGEREFWSLPFIVNDTTLIPRPDTEILVESALNLPLESNAKVLDLGTGTGAIALALASERAAWQITAVDKVEDAVALAKANRTNLKLEQVEILQSDWFSAVTSHDFDLIVSNPPYIDEADEHLHQGDVRFEPQSALTAADEGFADLYYIAKTARDYLKPNGYILLEHGFEQAVKLRAKLIELGYQNVATVRDFGSNDRCTMGKWMGLIGI.

S-adenosyl-L-methionine-binding positions include 122-126, Asp-145, Trp-173, and Asn-188; that span reads GTGTG. Residue 188-191 coordinates substrate; sequence NPPY.

It belongs to the protein N5-glutamine methyltransferase family. PrmC subfamily.

It catalyses the reaction L-glutaminyl-[peptide chain release factor] + S-adenosyl-L-methionine = N(5)-methyl-L-glutaminyl-[peptide chain release factor] + S-adenosyl-L-homocysteine + H(+). Its function is as follows. Methylates the class 1 translation termination release factors RF1/PrfA and RF2/PrfB on the glutamine residue of the universally conserved GGQ motif. The chain is Release factor glutamine methyltransferase from Shewanella oneidensis (strain ATCC 700550 / JCM 31522 / CIP 106686 / LMG 19005 / NCIMB 14063 / MR-1).